A 453-amino-acid polypeptide reads, in one-letter code: Ankyrin repeat and SOCS box protein 16 (453 aa).

ANK repeat units lie at residues 56–85, 110–139, 142–171, 175–204, 209–238, 242–279, and 283–312; these read CRDP…AANM, KQTA…ELDA, GGRA…KANV, EGMT…SVNV, SEVT…DVAL, QGET…DPQA, and KRHT…SPGV. The SOCS box domain maps to 397–453; the sequence is FYSSALSMENQPRQLQHLARLAVRAQLGSHCRQAAAQLPLPPLLRDYLLLGVEGRIQ.

It belongs to the ankyrin SOCS box (ASB) family.

Its pathway is protein modification; protein ubiquitination. Its function is as follows. May be a substrate-recognition component of a SCF-like ECS (Elongin-Cullin-SOCS-box protein) E3 ubiquitin-protein ligase complex which mediates the ubiquitination and subsequent proteasomal degradation of target proteins. In Mus musculus (Mouse), this protein is Ankyrin repeat and SOCS box protein 16 (Asb16).